The sequence spans 171 residues: Pro-corazonin (171 aa).

Residues 1–20 (MLHTRTIALLLVGLVVLVNA) form the signal peptide. Position 21 is a pyrrolidone carboxylic acid (Gln-21). At Asn-31 the chain carries Asparagine amide. Residues 82–171 (FLRNPCDLRV…GFSDHRQKIA (90 aa)) constitute a propeptide that is removed on maturation.

This sequence belongs to the corazonin family.

Its subcellular location is the secreted. Functionally, cardioactive peptide. Corazonin is probably involved in the physiological regulation of the heart beat. The sequence is that of Pro-corazonin from Anopheles gambiae (African malaria mosquito).